The sequence spans 398 residues: MPTTPTRAPSLLQAFLRSEALGGYVLMIAAVLALIVANSPLAPAYFQLLGTKLGYASEAFTLKESVLHWINDGLMAVFFLLVGLEIKREMLDGQLRGVSRIVLPGVAAAGGMLMPALVYLLVNQGDPAGLRGWAIPAATDIAFALGILALLGSRVPTSLKIFLTALAILDDLGAIAIIAVFYTAELNTSALAAAGGLLAALCVLNRLRVLRLAPYLLVGALLWYFVLKSGVHATLAGVALALAIPLRRQDPRQPGAEHSPLHALEHALHRPVALLIVPVFGFANAGVSFDGMGIDSLTAPIPLGIALGLFLGKQLGVFGFAWLAIRTGLASMPRHASFAQLYGVALLCGIGFTMSLFIGALAFDDAATIDATKIGVLTGSLVSAVLGYALLRVLPPAD.

11 helical membrane-spanning segments follow: residues 21–41 (LGGY…NSPL), 66–86 (VLHW…GLEI), 101–121 (IVLP…VYLL), 132–152 (GWAI…ALLG), 161–181 (IFLT…IAVF), 184–204 (AELN…LCVL), 216–236 (LLVG…ATLA), 274–294 (LLIV…GMGI), 305–325 (IALG…WLAI), 343–363 (GVAL…ALAF), and 374–394 (IGVL…LRVL).

This sequence belongs to the NhaA Na(+)/H(+) (TC 2.A.33) antiporter family.

The protein resides in the cell inner membrane. The catalysed reaction is Na(+)(in) + 2 H(+)(out) = Na(+)(out) + 2 H(+)(in). Its function is as follows. Na(+)/H(+) antiporter that extrudes sodium in exchange for external protons. This Bordetella bronchiseptica (strain ATCC BAA-588 / NCTC 13252 / RB50) (Alcaligenes bronchisepticus) protein is Na(+)/H(+) antiporter NhaA.